The sequence spans 503 residues: Transcription termination/antitermination protein NusA (503 aa).

One can recognise an S1 motif domain in the interval 139–203 (GEIINGIVKR…KGPQIFLSRV (65 aa)). The KH domain maps to 308 to 378 (RHKVEVVVSQ…LDVEEVIGQL (71 aa)).

This sequence belongs to the NusA family. In terms of assembly, monomer. Binds directly to the core enzyme of the DNA-dependent RNA polymerase and to nascent RNA.

The protein resides in the cytoplasm. Participates in both transcription termination and antitermination. The protein is Transcription termination/antitermination protein NusA of Rickettsia conorii (strain ATCC VR-613 / Malish 7).